Consider the following 100-residue polypeptide: MTEVGWWKLTFLRKKKSTPKVLYEIPDTYTQSEGGAEPPRPDSGNPNSNFNTRLEKIVDKNTKGKHVKVSNSGRFKEKKKVRASLAENPNLFDDREGKGQ.

The disordered stretch occupies residues 26-100; the sequence is PDTYTQSEGG…LFDDREGKGQ (75 aa). The span at 53 to 62 shows a compositional bias: basic and acidic residues; it reads RLEKIVDKNT.

The protein belongs to the PRR15 family.

The protein is Proline-rich protein 15-like protein (PRR15L) of Bos taurus (Bovine).